Reading from the N-terminus, the 158-residue chain is MGIEGILEKGFVTTSIDTVVNWSRTGSLWPMTFGLACCAVEMMHAGAARYDLDRFGLLFRPSPRQSDLMIVAGTLVNKMAPALRKVYDQMPEPRWVVSMGSCANGGGYYHYSYSVVRGCDRIVPVDIYVPGCPPTAEALIFGLIQLQKKIRRTNTIAR.

[4Fe-4S] cluster is bound by residues cysteine 37, cysteine 38, cysteine 102, and cysteine 132.

Belongs to the complex I 20 kDa subunit family. NDH-1 is composed of 14 different subunits. Subunits NuoB, C, D, E, F, and G constitute the peripheral sector of the complex. The cofactor is [4Fe-4S] cluster.

It localises to the cell inner membrane. The enzyme catalyses a quinone + NADH + 5 H(+)(in) = a quinol + NAD(+) + 4 H(+)(out). In terms of biological role, NDH-1 shuttles electrons from NADH, via FMN and iron-sulfur (Fe-S) centers, to quinones in the respiratory chain. The immediate electron acceptor for the enzyme in this species is believed to be ubiquinone. Couples the redox reaction to proton translocation (for every two electrons transferred, four hydrogen ions are translocated across the cytoplasmic membrane), and thus conserves the redox energy in a proton gradient. The sequence is that of NADH-quinone oxidoreductase subunit B from Acidithiobacillus ferrooxidans (strain ATCC 23270 / DSM 14882 / CIP 104768 / NCIMB 8455) (Ferrobacillus ferrooxidans (strain ATCC 23270)).